The sequence spans 317 residues: Porphobilinogen deaminase (317 aa).

An S-(dipyrrolylmethanemethyl)cysteine modification is found at Cys-245.

It belongs to the HMBS family. In terms of assembly, monomer. The cofactor is dipyrromethane.

The catalysed reaction is 4 porphobilinogen + H2O = hydroxymethylbilane + 4 NH4(+). It functions in the pathway porphyrin-containing compound metabolism; protoporphyrin-IX biosynthesis; coproporphyrinogen-III from 5-aminolevulinate: step 2/4. The protein operates within porphyrin-containing compound metabolism; chlorophyll biosynthesis. Functionally, tetrapolymerization of the monopyrrole PBG into the hydroxymethylbilane pre-uroporphyrinogen in several discrete steps. The sequence is that of Porphobilinogen deaminase from Synechococcus sp. (strain CC9605).